The following is a 724-amino-acid chain: Catalase-peroxidase (724 aa).

Residues 1 to 20 (MDENKTKPAGKCPVMHGGNT) are disordered. Residues 98-225 (WHSAGTYRTA…LAAVQMGLIY (128 aa)) constitute a cross-link (tryptophyl-tyrosyl-methioninium (Trp-Tyr) (with M-251)). The active-site Proton acceptor is His99. A cross-link (tryptophyl-tyrosyl-methioninium (Tyr-Met) (with W-98)) is located at residues 225 to 251 (YVNPEGVDGNPDPLRTAQDMRVTFSRM). His266 serves as a coordination point for heme b.

The protein belongs to the peroxidase family. Peroxidase/catalase subfamily. Homodimer or homotetramer. Heme b serves as cofactor. Post-translationally, formation of the three residue Trp-Tyr-Met cross-link is important for the catalase, but not the peroxidase activity of the enzyme.

The enzyme catalyses H2O2 + AH2 = A + 2 H2O. It catalyses the reaction 2 H2O2 = O2 + 2 H2O. Its function is as follows. Bifunctional enzyme with both catalase and broad-spectrum peroxidase activity. The sequence is that of Catalase-peroxidase from Pectobacterium carotovorum subsp. carotovorum (strain PC1).